We begin with the raw amino-acid sequence, 54 residues long: Ferredoxin (54 aa).

4Fe-4S ferredoxin-type domains follow at residues 2–28 and 29–54; these read HVISDECVKCGACASTCPTGAIEEGET and KYVVTDSCIDCGACEAVCPTGAISAE. Cys8, Cys11, Cys14, Cys18, Cys36, Cys39, Cys42, and Cys46 together coordinate [4Fe-4S] cluster.

Requires [4Fe-4S] cluster as cofactor.

Its function is as follows. Ferredoxins are iron-sulfur proteins that transfer electrons in a wide variety of metabolic reactions. The protein is Ferredoxin of Megasphaera elsdenii.